A 108-amino-acid chain; its full sequence is Iron-sulfur cluster assembly protein CyaY (108 aa).

It belongs to the frataxin family.

Functionally, involved in iron-sulfur (Fe-S) cluster assembly. May act as a regulator of Fe-S biogenesis. The protein is Iron-sulfur cluster assembly protein CyaY of Burkholderia ambifaria (strain MC40-6).